A 314-amino-acid chain; its full sequence is Vacuolar membrane protein VL3_4134 (314 aa).

Residues 32–60 (KPTSSVVSETSSKSLPSLTSSAFSTSSGA) form a disordered region. The helical transmembrane segment at 93–113 (VYIAVGAVIGAIFISILIWWL) threads the bilayer. Residues Ser148, Ser254, and Ser274 each carry the phosphoserine modification. The tract at residues 240 to 309 (EERKLNLNRP…PSMFLDDVLN (70 aa)) is disordered. Residues 254 to 269 (SPERKEKKINSMEGYH) are compositionally biased toward basic and acidic residues.

This sequence belongs to the PRM5 family.

It localises to the vacuole membrane. This chain is Vacuolar membrane protein VL3_4134, found in Saccharomyces cerevisiae (strain Zymaflore VL3) (Baker's yeast).